Reading from the N-terminus, the 464-residue chain is Purple acid phosphatase (464 aa).

A signal peptide spans 1–30; sequence MGVVEGLLALALVLSACVMCNGGSSSPFIR. N-linked (GlcNAc...) asparagine glycans are attached at residues Asn-108 and Asn-136. Asp-162 serves as a coordination point for Fe cation. Asn-170 is a glycosylation site (N-linked (GlcNAc...) asparagine). Fe cation-binding residues include Asp-191 and Tyr-194. Asp-191 serves as a coordination point for Zn(2+). Asn-228 serves as a coordination point for Zn(2+). Asn-228 is a binding site for substrate. A glycan (N-linked (GlcNAc...) asparagine) is linked at Asn-301. His-313 lines the Zn(2+) pocket. His-323 serves as the catalytic Proton donor. Residue His-350 participates in Zn(2+) binding. Residue 350–352 participates in substrate binding; it reads HVH. His-352 contacts Fe cation. 2 N-linked (GlcNAc...) asparagine glycosylation sites follow: Asn-398 and Asn-423.

Belongs to the metallophosphoesterase superfamily. Purple acid phosphatase family. In terms of assembly, homodimer; disulfide-linked. The cofactor is Fe cation. It depends on Zn(2+) as a cofactor. Mn(2+) is required as a cofactor. Cu(2+) serves as cofactor. Requires Mg(2+) as cofactor.

Its subcellular location is the secreted. It carries out the reaction a phosphate monoester + H2O = an alcohol + phosphate. In Glycine max (Soybean), this protein is Purple acid phosphatase.